We begin with the raw amino-acid sequence, 127 residues long: Cytochrome c2 (127 aa).

The first 20 residues, 1–20, serve as a signal peptide directing secretion; sequence MRKLVFGLFVLAASVAPAAA. Residue Gln-21 is modified to Pyrrolidone carboxylic acid. Heme c is bound by residues Cys-33, Cys-36, His-37, and Met-99.

The protein belongs to the cytochrome c family. Post-translationally, binds 1 heme c group covalently per subunit.

In terms of biological role, cytochrome c2 is found mainly in purple, non-sulfur, photosynthetic bacteria where it functions as the electron donor to the oxidized bacteriochlorophyll in the photophosphorylation pathway. However, it may also have a role in the respiratory chain and is found in some non-photosynthetic bacteria. This Blastochloris viridis (Rhodopseudomonas viridis) protein is Cytochrome c2 (cycA).